A 134-amino-acid chain; its full sequence is uncharacterized protein (134 aa).

This is an uncharacterized protein from Homo sapiens (Human).